Reading from the N-terminus, the 155-residue chain is Putative pre-16S rRNA nuclease (155 aa).

Belongs to the YqgF nuclease family.

Its subcellular location is the cytoplasm. Functionally, could be a nuclease involved in processing of the 5'-end of pre-16S rRNA. In Wolbachia pipientis wMel, this protein is Putative pre-16S rRNA nuclease.